A 499-amino-acid polypeptide reads, in one-letter code: Putative ribose/galactose/methyl galactoside import ATP-binding protein 3 (499 aa).

2 consecutive ABC transporter domains span residues 8–243 (LRMR…VGRE) and 253–497 (SKIG…TGEE). Position 40–47 (40–47 (GENGAGKS)) interacts with ATP.

The protein belongs to the ABC transporter superfamily. Carbohydrate importer 2 (CUT2) (TC 3.A.1.2) family.

The protein localises to the cell inner membrane. It carries out the reaction D-ribose(out) + ATP + H2O = D-ribose(in) + ADP + phosphate + H(+). The catalysed reaction is D-galactose(out) + ATP + H2O = D-galactose(in) + ADP + phosphate + H(+). In terms of biological role, part of an ABC transporter complex involved in carbohydrate import. Could be involved in ribose, galactose and/or methyl galactoside import. Responsible for energy coupling to the transport system. The sequence is that of Putative ribose/galactose/methyl galactoside import ATP-binding protein 3 from Agrobacterium fabrum (strain C58 / ATCC 33970) (Agrobacterium tumefaciens (strain C58)).